The sequence spans 122 residues: Small ribosomal subunit protein uS13 (122 aa).

The segment at 99-122 (RGQRTHTNARTRKGPAKAIAGKKK) is disordered.

It belongs to the universal ribosomal protein uS13 family. Part of the 30S ribosomal subunit. Forms a loose heterodimer with protein S19. Forms two bridges to the 50S subunit in the 70S ribosome.

In terms of biological role, located at the top of the head of the 30S subunit, it contacts several helices of the 16S rRNA. In the 70S ribosome it contacts the 23S rRNA (bridge B1a) and protein L5 of the 50S subunit (bridge B1b), connecting the 2 subunits; these bridges are implicated in subunit movement. Contacts the tRNAs in the A and P-sites. In Rhodopseudomonas palustris (strain TIE-1), this protein is Small ribosomal subunit protein uS13.